The following is a 552-amino-acid chain: Urocanate hydratase (552 aa).

NAD(+) contacts are provided by residues 49 to 50 (GG), Gln-127, 173 to 175 (GMG), Asp-193, 239 to 240 (NA), 260 to 264 (QTSAH), 270 to 271 (YV), and Tyr-319. Residue Cys-407 is part of the active site. Residue Gly-489 coordinates NAD(+).

This sequence belongs to the urocanase family. The cofactor is NAD(+).

It is found in the cytoplasm. It carries out the reaction 4-imidazolone-5-propanoate = trans-urocanate + H2O. The protein operates within amino-acid degradation; L-histidine degradation into L-glutamate; N-formimidoyl-L-glutamate from L-histidine: step 2/3. Functionally, catalyzes the conversion of urocanate to 4-imidazolone-5-propionate. The chain is Urocanate hydratase from Bacillus cytotoxicus (strain DSM 22905 / CIP 110041 / 391-98 / NVH 391-98).